Reading from the N-terminus, the 635-residue chain is Sodium- and chloride-dependent creatine transporter 1 (635 aa).

Positions 1-27 (MAKKSAENGIYSVSGDEKKGPLIVSGP) are disordered. Over 1 to 60 (MAKKSAENGIYSVSGDEKKGPLIVSGPDGAPAKGDGPAGLGAPGGRLAVPPRETWTRQMD) the chain is Cytoplasmic. A helical transmembrane segment spans residues 61–81 (FIMSCVGFAVGLGNVWRFPYL). At 82-87 (CYKNGG) the chain is on the extracellular side. A helical membrane pass occupies residues 88 to 108 (GVFLIPYVLIALVGGIPIFFL). Topologically, residues 109–138 (EISLGQFMKAGSINVWNICPLFKGLGYASM) are cytoplasmic. A helical transmembrane segment spans residues 139-159 (VIVFYCNTYYIMVLAWGFYYL). Topologically, residues 160-230 (VKSFTTTLPW…LSTGLEVPGA (71 aa)) are extracellular. Asn192 and Asn197 each carry an N-linked (GlcNAc...) asparagine glycan. The helical transmembrane segment at 231 to 251 (LNWEVTLCLLACWVLVYFCVW) threads the bilayer. Residues 252-269 (KGVKSTGKIVYFTATFPY) are Cytoplasmic-facing. Residues 270–290 (VVLVVLLVRGVLLPGALDGII) traverse the membrane as a helical segment. The Extracellular segment spans residues 291–304 (YYLKPDWSKLGSPQ). Residues 305-325 (VWIDAGTQIFFSYAIGLGALT) form a helical membrane-spanning segment. Residues 326–341 (ALGSYNRFNNNCYKDA) lie on the Cytoplasmic side of the membrane. Residues 342–362 (IILALINSGTSFFAGFVVFSI) traverse the membrane as a helical segment. At 363–394 (LGFMATEQGVHISKVAESGPGLAFIAYPRAVT) the chain is on the extracellular side. Residues 395-415 (LMPVAPLWAALFFFMLLLLGL) form a helical membrane-spanning segment. The Cytoplasmic portion of the chain corresponds to 416–444 (DSQFVGVEGFITGLLDLLPASYYFRFQRE). The chain crosses the membrane as a helical span at residues 445–465 (ISVALCCALCFVIDLSMVTDG). The Extracellular portion of the chain corresponds to 466–479 (GMYVFQLFDYYSAS). The helical transmembrane segment at 480–500 (GTTLLWQAFWECVVVAWVYGA) threads the bilayer. Over 501–520 (DRFMDDIACMIGYRPCPWMK) the chain is Cytoplasmic. Residues 521 to 541 (WCWSFFTPLVCMGIFIFNIVY) traverse the membrane as a helical segment. Topologically, residues 542–560 (YEPLVYNNTYVYPWWGEAM) are extracellular. An N-linked (GlcNAc...) asparagine glycan is attached at Asn548. The helical transmembrane segment at 561-581 (GWAFALSSMLCVPLHLLGCLL) threads the bilayer. Over 582-635 (RAKGTMAERWQHLTQPIWGLHHLEYRAQDADVRGLTTLTPVSESSKVVVVESVM) the chain is Cytoplasmic. Thr617 and Thr620 each carry phosphothreonine. Ser623 carries the phosphoserine modification.

It belongs to the sodium:neurotransmitter symporter (SNF) (TC 2.A.22) family. SLC6A8 subfamily. Post-translationally, glycosylated. As to expression, brain. Highly expressed in brain capillaries branching in all cortical layers and moderately expressed in neuronal perikarya (at protein level).

The protein localises to the cell membrane. Its subcellular location is the apical cell membrane. It catalyses the reaction creatine(out) + chloride(out) + 2 Na(+)(out) = creatine(in) + chloride(in) + 2 Na(+)(in). In terms of biological role, creatine:sodium symporter which mediates the uptake of creatine. Plays an important role in supplying creatine to the brain via the blood-brain barrier. This is Sodium- and chloride-dependent creatine transporter 1 (Slc6a8) from Mus musculus (Mouse).